The following is a 92-amino-acid chain: Small ribosomal subunit protein uS19 (92 aa).

It belongs to the universal ribosomal protein uS19 family.

Its function is as follows. Protein S19 forms a complex with S13 that binds strongly to the 16S ribosomal RNA. The polypeptide is Small ribosomal subunit protein uS19 (Methylorubrum extorquens (strain CM4 / NCIMB 13688) (Methylobacterium extorquens)).